We begin with the raw amino-acid sequence, 348 residues long: Phosphoribosylformylglycinamidine cyclo-ligase (348 aa).

It belongs to the AIR synthase family.

The protein localises to the cytoplasm. It catalyses the reaction 2-formamido-N(1)-(5-O-phospho-beta-D-ribosyl)acetamidine + ATP = 5-amino-1-(5-phospho-beta-D-ribosyl)imidazole + ADP + phosphate + H(+). It participates in purine metabolism; IMP biosynthesis via de novo pathway; 5-amino-1-(5-phospho-D-ribosyl)imidazole from N(2)-formyl-N(1)-(5-phospho-D-ribosyl)glycinamide: step 2/2. This is Phosphoribosylformylglycinamidine cyclo-ligase from Geobacter sulfurreducens (strain ATCC 51573 / DSM 12127 / PCA).